Consider the following 150-residue polypeptide: Large ribosomal subunit protein bL9 (150 aa).

Belongs to the bacterial ribosomal protein bL9 family.

Its function is as follows. Binds to the 23S rRNA. This Variovorax paradoxus (strain S110) protein is Large ribosomal subunit protein bL9.